Here is a 323-residue protein sequence, read N- to C-terminus: Phosphatidylethanolamine:ceramide ethanolaminephosphotransferase (323 aa).

At 1-26 the chain is on the cytoplasmic side; the sequence is MAVPPVEMYSGSFWNRMRKPLPLRTQ. Residues 27-47 traverse the membrane as a helical segment; that stretch reads VIRFTVVFVIVSFILVVALQI. Topologically, residues 48-74 are extracellular; it reads THERMPDPKVTKPLPDLGFELLTKVPG. Residues 75 to 95 traverse the membrane as a helical segment; it reads MYVLADCCIGFLNILSVFTAF. The Cytoplasmic segment spans residues 96–147; sequence KLYLLHRHCVGSGEPELPCNIPGVSRFFLSVWLCKENCRIELRNIHTIAWIR. A helical transmembrane segment spans residues 148-168; the sequence is FITSYALLLLSRSIIMVVTSL. Topologically, residues 169-187 are extracellular; that stretch reads PNPDDLCQNPPKIENRVKD. Residues 188 to 208 form a helical membrane-spanning segment; sequence ILLTVLTAGAGSIHCGDLMYS. The Cytoplasmic segment spans residues 209 to 233; it reads GHTVILTLHLMFHWIYGAMVHWSFR. A helical transmembrane segment spans residues 234–254; that stretch reads PVVTVVAIFGYYCIVASRFHY. Over 255–257 the chain is Extracellular; the sequence is TDD. The helical transmembrane segment at 258 to 278 threads the bilayer; sequence VLVAIYLTIATFIAVGHNADG. Residues 279–323 lie on the Cytoplasmic side of the membrane; the sequence is APWQLQLFIRWWPCCGANSREVAEDGVPVAIVIKNEEMMNFEGKS.

This sequence belongs to the sphingomyelin synthase family.

Its subcellular location is the membrane. It carries out the reaction an N-acylsphing-4-enine + a 1,2-diacyl-sn-glycero-3-phosphoethanolamine = an N-acylsphing-4-enine 1-phosphoethanolamine + a 1,2-diacyl-sn-glycerol. The enzyme catalyses an N-acylsphinganine + a 1,2-diacyl-sn-glycero-3-phosphoethanolamine = an N-acylsphinganine-1-phosphoethanolamine + a 1,2-diacyl-sn-glycerol. Functionally, predominantly synthesizes ethanolamine-phosphorylceramide (EPC), with minimal sphingomyelin (SM)/inositol phosphorylceramide (IPC) synthase activity. Specificity is likely to be defined by residues in the lumenal catalytic domain that interact with the polar head groups of the phospholipid donors. EPC is synthesized by both stages of the parasite life cycle, bloodstream forms (BSF) and procyclic forms (PCF), by transferring the phosphoethanolamine from a 1,2-diacyl-sn-glycero-3-phosphoethanolamine to an N-acylsphing-4-enine (ceramide) or an N-acylsphinganine (dihydroceramide). Similarly, SM is synthesized by transferring the phosphocholine from a 1,2-diacyl-sn-glycero-3-phosphocholine to ceramide or dihydroceramide by BSF and PCF, while IPC is confined to PCF. The ceramide/dihydroceramide ratios are skewed towards dihydroceramide in PCF parasites and ceramide in BSF parasites, this is likely due to differential expression and/or regulation of dihydroceramide desaturase, the enzyme responsible for converting dihydroceramide to ceramide. This chain is Phosphatidylethanolamine:ceramide ethanolaminephosphotransferase, found in Trypanosoma brucei brucei.